We begin with the raw amino-acid sequence, 199 residues long: Puromycin N-acetyltransferase (199 aa).

An N-acetyltransferase domain is found at 6-198 (PTVRLATRDD…RTWCMTRKPG (193 aa)).

Its function is as follows. Detoxification of puromycin. The sequence is that of Puromycin N-acetyltransferase (pac) from Streptomyces alboniger.